A 540-amino-acid chain; its full sequence is UDP-N-acetylmuramyl-tripeptide synthetase (540 aa).

Serine 33 is a binding site for UDP-N-acetyl-alpha-D-muramoyl-L-alanyl-D-glutamate. Residue 114 to 120 (GTEGKSS) coordinates ATP. UDP-N-acetyl-alpha-D-muramoyl-L-alanyl-D-glutamate contacts are provided by residues 158–159 (TT), serine 185, and arginine 195. Position 227 is an N6-carboxylysine (lysine 227).

This sequence belongs to the MurCDEF family. MurE subfamily. Carboxylation is probably crucial for Mg(2+) binding and, consequently, for the gamma-phosphate positioning of ATP.

The protein localises to the cytoplasm. Its pathway is cell wall biogenesis; peptidoglycan biosynthesis. Catalyzes the addition of an amino acid to the nucleotide precursor UDP-N-acetylmuramoyl-L-alanyl-D-glutamate (UMAG) in the biosynthesis of bacterial cell-wall peptidoglycan. The chain is UDP-N-acetylmuramyl-tripeptide synthetase from Treponema pallidum (strain Nichols).